The following is a 390-amino-acid chain: Alkanesulfonate monooxygenase 1 (390 aa).

Positions 364-390 (TGSSVNTGPFGETIAGDHRPKSLASAS) are disordered.

Belongs to the SsuD family.

The catalysed reaction is an alkanesulfonate + FMNH2 + O2 = an aldehyde + FMN + sulfite + H2O + 2 H(+). Functionally, catalyzes the desulfonation of aliphatic sulfonates. This Mesorhizobium japonicum (strain LMG 29417 / CECT 9101 / MAFF 303099) (Mesorhizobium loti (strain MAFF 303099)) protein is Alkanesulfonate monooxygenase 1 (ssuD1).